A 365-amino-acid polypeptide reads, in one-letter code: tRNA N6-adenosine threonylcarbamoyltransferase (365 aa).

Residues His-119 and His-123 each coordinate Fe cation. Residues 141–145, Asp-174, Gly-187, and Asn-289 contribute to the substrate site; that span reads LVSGG. Fe cation is bound at residue Asp-317. The interval 342 to 365 is disordered; that stretch reads ARPRWPLDSKSPAMLGSGKKGAKA.

This sequence belongs to the KAE1 / TsaD family. It depends on Fe(2+) as a cofactor.

It localises to the cytoplasm. The enzyme catalyses L-threonylcarbamoyladenylate + adenosine(37) in tRNA = N(6)-L-threonylcarbamoyladenosine(37) in tRNA + AMP + H(+). Functionally, required for the formation of a threonylcarbamoyl group on adenosine at position 37 (t(6)A37) in tRNAs that read codons beginning with adenine. Is involved in the transfer of the threonylcarbamoyl moiety of threonylcarbamoyl-AMP (TC-AMP) to the N6 group of A37, together with TsaE and TsaB. TsaD likely plays a direct catalytic role in this reaction. The chain is tRNA N6-adenosine threonylcarbamoyltransferase from Roseobacter denitrificans (strain ATCC 33942 / OCh 114) (Erythrobacter sp. (strain OCh 114)).